We begin with the raw amino-acid sequence, 118 residues long: Vitelline membrane protein Vm32E (118 aa).

The N-terminal stretch at 1–17 (MKIVALTLVAFVALAGA) is a signal peptide. The VM domain occupies 36 to 75 (GYPAPPCPTNYLFSCQPNLAPAPCAQEAQAPAYGSAGAYT).

This sequence belongs to the vitelline membrane family.

It is found in the secreted. Major early eggshell protein. The sequence is that of Vitelline membrane protein Vm32E from Drosophila mauritiana (Fruit fly).